Consider the following 716-residue polypeptide: DEAD-box ATP-dependent RNA helicase 31 (716 aa).

Residues 99-188 are disordered; the sequence is GILKSDDEDE…LRLEDESSDE (90 aa). Basic and acidic residues predominate over residues 110–121; it reads DRSRGRNQEKRG. Positions 144–153 are enriched in polar residues; sequence SRIQGKSSEA. The span at 155–188 shows a compositional bias: basic and acidic residues; sequence FRGRKETSFSRDREDEKGLRKREDLRLEDESSDE. The short motif at 248–276 is the Q motif element; the sequence is TRFDHYPLSPLSLKAIKDAGYETMTVVQE. The region spanning 279 to 462 is the Helicase ATP-binding domain; the sequence is LPIILKGKDV…LVALRRDHEF (184 aa). 292 to 299 is an ATP binding site; the sequence is AKTGTGKT. Residues 410–413 carry the DEAD box motif; sequence DEAD. The Helicase C-terminal domain maps to 497–643; sequence LREHIMGNVD…IDPETVKKVQ (147 aa).

It belongs to the DEAD box helicase family.

It catalyses the reaction ATP + H2O = ADP + phosphate + H(+). This is DEAD-box ATP-dependent RNA helicase 31 (RH31) from Arabidopsis thaliana (Mouse-ear cress).